The sequence spans 156 residues: Small ribosomal subunit protein uS7 (156 aa).

The protein belongs to the universal ribosomal protein uS7 family. Part of the 30S ribosomal subunit. Contacts proteins S9 and S11.

In terms of biological role, one of the primary rRNA binding proteins, it binds directly to 16S rRNA where it nucleates assembly of the head domain of the 30S subunit. Is located at the subunit interface close to the decoding center, probably blocks exit of the E-site tRNA. The protein is Small ribosomal subunit protein uS7 of Erythrobacter litoralis (strain HTCC2594).